The following is a 732-amino-acid chain: MATLAASSSLLSCLLVLFLSSVSAVTDDKQVYIVYMGSLSSRADYTPTSDHMNILQEVTGESSIEGRLVRSYKRSFNGFAARLTESERERVAKMVGVVSVFPNKKLQLQTTTSWDFMGLKEGIKTKRNPTVESDTIIGVIDSGITPESQSFSDKGFGPPPQKWKGVCSGGKNFTCNNKLIGARDYTSEGTRDMDGHGTHTASTAAGNAVVDASFFGIGNGTVRGGVPASRVAAYKVCTPTGCSSEALLSAFDDAIADGVDLITISIGDKTASMFQNDPIAIGAFHAMAKGVLTVNSAGNSGPKPISVSGVAPWILTVAASTTNRGFVTKVVLGNGKTLVGKSVNAYEMKGKDYPLVYGKSAASSACDAESAGLCELSCVDKSRVKGKILVCGGPGGLKIVESVGAVGLIYRTPKPDVAFIHPLPAAGLLTEDFESLVSYLESTDSPQAIVLKTEAIFNRTSPVIASFSSRGPNTIAVDILKPDITAPGVEILAAYSPAGEPSQDDTRHVKYSVLSGTSMSCPHVAGVAAYVKTFNPKWSPSMIQSAIMTTAWPVNATGTGIASTEFAYGSGHVDPIAASNPGLVYELDKSDHIAFLCGMNYTSQVLKVISGETVTCSEAKKILPRNLNYPSMSAKLSGSGTTFTVTFNRTLTNVGTPNSTYTSKVVAGHGSKLDVKITPSVLSFKTVNEKQSFTVTVTGSNLDSEVPSSANLIWSDGTHNVRSPIVVYTSDY.

An N-terminal signal peptide occupies residues 1–24; that stretch reads MATLAASSSLLSCLLVLFLSSVSA. Positions 25–109 are cleaved as a propeptide — activation peptide; the sequence is VTDDKQVYIV…VFPNKKLQLQ (85 aa). Residues 31–108 enclose the Inhibitor I9 domain; sequence VYIVYMGSLS…SVFPNKKLQL (78 aa). One can recognise a Peptidase S8 domain in the interval 113–579; the sequence is SWDFMGLKEG…SGHVDPIAAS (467 aa). Asp-141 functions as the Charge relay system in the catalytic mechanism. N-linked (GlcNAc...) asparagine glycosylation is present at Asn-172. His-196 acts as the Charge relay system in catalysis. N-linked (GlcNAc...) asparagine glycosylation occurs at Asn-219. One can recognise a PA domain in the interval 352 to 436; the sequence is DYPLVYGKSA…GLLTEDFESL (85 aa). An N-linked (GlcNAc...) asparagine glycan is attached at Asn-458. Residue Ser-518 is the Charge relay system of the active site. 4 N-linked (GlcNAc...) asparagine glycosylation sites follow: Asn-555, Asn-600, Asn-648, and Asn-658.

It belongs to the peptidase S8 family. Post-translationally, the C-terminal propeptide is autocleaved.

It localises to the secreted. The sequence is that of Subtilisin-like protease SBT4.13 from Arabidopsis thaliana (Mouse-ear cress).